The primary structure comprises 425 residues: Serine--tRNA ligase (425 aa).

233-235 (TAE) is an L-serine binding site. 264–266 (RAE) contacts ATP. Glutamate 287 provides a ligand contact to L-serine. 351 to 354 (EISS) provides a ligand contact to ATP. Residue serine 387 participates in L-serine binding.

This sequence belongs to the class-II aminoacyl-tRNA synthetase family. Type-1 seryl-tRNA synthetase subfamily. Homodimer. The tRNA molecule binds across the dimer.

Its subcellular location is the cytoplasm. It carries out the reaction tRNA(Ser) + L-serine + ATP = L-seryl-tRNA(Ser) + AMP + diphosphate + H(+). It catalyses the reaction tRNA(Sec) + L-serine + ATP = L-seryl-tRNA(Sec) + AMP + diphosphate + H(+). The protein operates within aminoacyl-tRNA biosynthesis; selenocysteinyl-tRNA(Sec) biosynthesis; L-seryl-tRNA(Sec) from L-serine and tRNA(Sec): step 1/1. Its function is as follows. Catalyzes the attachment of serine to tRNA(Ser). Is also able to aminoacylate tRNA(Sec) with serine, to form the misacylated tRNA L-seryl-tRNA(Sec), which will be further converted into selenocysteinyl-tRNA(Sec). The chain is Serine--tRNA ligase from Clostridium perfringens (strain SM101 / Type A).